The chain runs to 446 residues: NADH-ubiquinone oxidoreductase chain 4 (446 aa).

The next 13 helical transmembrane spans lie at 4–24 (IIFF…YWMV), 56–76 (MLSY…LLAS), 93–113 (IIIL…FMFY), 114–134 (LFFE…GYQP), 139–159 (AGLY…IGIF), 182–202 (LLYF…LVHL), 218–238 (ILAG…ISFL), 245–265 (YSFV…LVCL), 272–292 (ALIA…LLTM), 297–317 (LCGS…LFCL), 330–350 (MLIN…WFLL), 373–393 (IVSW…FSAA), and 426–446 (LLHW…MLWL).

Belongs to the complex I subunit 4 family.

It localises to the mitochondrion membrane. It carries out the reaction a ubiquinone + NADH + 5 H(+)(in) = a ubiquinol + NAD(+) + 4 H(+)(out). Core subunit of the mitochondrial membrane respiratory chain NADH dehydrogenase (Complex I) that is believed to belong to the minimal assembly required for catalysis. Complex I functions in the transfer of electrons from NADH to the respiratory chain. The immediate electron acceptor for the enzyme is believed to be ubiquinone. The protein is NADH-ubiquinone oxidoreductase chain 4 (mt:ND4) of Drosophila melanogaster (Fruit fly).